The sequence spans 28 residues: M-poneritoxin-Da4b (28 aa).

Ala-28 bears the Alanine amide mark.

Expressed by the venom gland.

Its subcellular location is the secreted. Functionally, the synthetic peptide has antimicrobial activity against the Gram-positive bacteria B.amyloliquefacies S499 (MIC=0.05 mM), L.monocytogenes 2231 and S.aureus ATCC 29213, against the Gram-negative bacteria P.putida BTP1, P.aeruginosa PaO1 and E.coli ATCC 10536, and against the fungi S.cerevisiae, R.mucilaginosa and C.cucumerinum. It is not active against the fungi F.oxysporum and B.cinerea. The polypeptide is M-poneritoxin-Da4b (Dinoponera australis (Giant neotropical hunting ant)).